An 89-amino-acid polypeptide reads, in one-letter code: Exodeoxyribonuclease 7 small subunit (89 aa).

The disordered stretch occupies residues 1-22; that stretch reads MRKKSSSNKEETALHPPPENFE.

This sequence belongs to the XseB family. As to quaternary structure, heterooligomer composed of large and small subunits.

The protein localises to the cytoplasm. It carries out the reaction Exonucleolytic cleavage in either 5'- to 3'- or 3'- to 5'-direction to yield nucleoside 5'-phosphates.. Functionally, bidirectionally degrades single-stranded DNA into large acid-insoluble oligonucleotides, which are then degraded further into small acid-soluble oligonucleotides. The polypeptide is Exodeoxyribonuclease 7 small subunit (Nitrosomonas europaea (strain ATCC 19718 / CIP 103999 / KCTC 2705 / NBRC 14298)).